Reading from the N-terminus, the 355-residue chain is DNA polymerase IV (355 aa).

Residues 4–185 form the UmuC domain; sequence IIHIDMDCYF…LSLGKIPGVG (182 aa). Residues aspartate 8 and aspartate 103 each contribute to the Mg(2+) site. Glutamate 104 is a catalytic residue.

This sequence belongs to the DNA polymerase type-Y family. As to quaternary structure, monomer. Requires Mg(2+) as cofactor.

It is found in the cytoplasm. It carries out the reaction DNA(n) + a 2'-deoxyribonucleoside 5'-triphosphate = DNA(n+1) + diphosphate. Poorly processive, error-prone DNA polymerase involved in untargeted mutagenesis. Copies undamaged DNA at stalled replication forks, which arise in vivo from mismatched or misaligned primer ends. These misaligned primers can be extended by PolIV. Exhibits no 3'-5' exonuclease (proofreading) activity. May be involved in translesional synthesis, in conjunction with the beta clamp from PolIII. This chain is DNA polymerase IV, found in Shewanella amazonensis (strain ATCC BAA-1098 / SB2B).